We begin with the raw amino-acid sequence, 194 residues long: Holliday junction branch migration complex subunit RuvA (194 aa).

Residues 1 to 64 are domain I; that stretch reads MIGRLRGILA…EDSVSLYGFL (64 aa). Residues 65 to 140 are domain II; it reads REGERRLFRD…RAADFSSGAP (76 aa). The interval 140 to 144 is flexible linker; that stretch reads PITGQ. A domain III region spans residues 145 to 194; that stretch reads LGPDAISEATVALQQLGYKPAEAARMARDAGAEGGEVATVIRKALQAALR.

The protein belongs to the RuvA family. As to quaternary structure, homotetramer. Forms an RuvA(8)-RuvB(12)-Holliday junction (HJ) complex. HJ DNA is sandwiched between 2 RuvA tetramers; dsDNA enters through RuvA and exits via RuvB. An RuvB hexamer assembles on each DNA strand where it exits the tetramer. Each RuvB hexamer is contacted by two RuvA subunits (via domain III) on 2 adjacent RuvB subunits; this complex drives branch migration. In the full resolvosome a probable DNA-RuvA(4)-RuvB(12)-RuvC(2) complex forms which resolves the HJ.

The protein resides in the cytoplasm. In terms of biological role, the RuvA-RuvB-RuvC complex processes Holliday junction (HJ) DNA during genetic recombination and DNA repair, while the RuvA-RuvB complex plays an important role in the rescue of blocked DNA replication forks via replication fork reversal (RFR). RuvA specifically binds to HJ cruciform DNA, conferring on it an open structure. The RuvB hexamer acts as an ATP-dependent pump, pulling dsDNA into and through the RuvAB complex. HJ branch migration allows RuvC to scan DNA until it finds its consensus sequence, where it cleaves and resolves the cruciform DNA. The polypeptide is Holliday junction branch migration complex subunit RuvA (Xanthomonas oryzae pv. oryzae (strain MAFF 311018)).